A 225-amino-acid chain; its full sequence is MKQIQIAIDGPASSGKSTVAKIIAKDFGYTYLDTGAMYRAATYLALRHHLTEEDATEIVDLLNNHSVSFGRAEDGEQLVFVGDVDVTHPIRENEVTNNVSWVSAIPQVREKLVALQQQIAAQGGIVMDGRDIGTVVLPQAELKIYLVASVEERAERRYKENLSKGIPADLEKLKEEIAERDYKDSHREVSPLRPADDAIHFDTTGIGISEVVAFIEEKAKKIIDK.

10–18 (GPASSGKST) is an ATP binding site.

Belongs to the cytidylate kinase family. Type 1 subfamily.

It localises to the cytoplasm. The enzyme catalyses CMP + ATP = CDP + ADP. It catalyses the reaction dCMP + ATP = dCDP + ADP. This Streptococcus sanguinis (strain SK36) protein is Cytidylate kinase.